The chain runs to 159 residues: Ribosomal RNA large subunit methyltransferase H (159 aa).

S-adenosyl-L-methionine is bound by residues L76, G108, and 127–132 (MSKMTF).

The protein belongs to the RNA methyltransferase RlmH family. In terms of assembly, homodimer.

Its subcellular location is the cytoplasm. It catalyses the reaction pseudouridine(1915) in 23S rRNA + S-adenosyl-L-methionine = N(3)-methylpseudouridine(1915) in 23S rRNA + S-adenosyl-L-homocysteine + H(+). In terms of biological role, specifically methylates the pseudouridine at position 1915 (m3Psi1915) in 23S rRNA. The polypeptide is Ribosomal RNA large subunit methyltransferase H (Ureaplasma parvum serovar 3 (strain ATCC 27815 / 27 / NCTC 11736)).